The chain runs to 127 residues: Holo-[acyl-carrier-protein] synthase (127 aa).

Mg(2+) is bound by residues Asp9 and Glu58.

Belongs to the P-Pant transferase superfamily. AcpS family. It depends on Mg(2+) as a cofactor.

It is found in the cytoplasm. The catalysed reaction is apo-[ACP] + CoA = holo-[ACP] + adenosine 3',5'-bisphosphate + H(+). In terms of biological role, transfers the 4'-phosphopantetheine moiety from coenzyme A to a Ser of acyl-carrier-protein. This chain is Holo-[acyl-carrier-protein] synthase, found in Shewanella sp. (strain MR-4).